The following is a 480-amino-acid chain: UDP-N-acetylmuramate--L-alanine ligase (480 aa).

Residue 129-135 (GTHGKTT) coordinates ATP.

The protein belongs to the MurCDEF family.

It localises to the cytoplasm. The catalysed reaction is UDP-N-acetyl-alpha-D-muramate + L-alanine + ATP = UDP-N-acetyl-alpha-D-muramoyl-L-alanine + ADP + phosphate + H(+). It participates in cell wall biogenesis; peptidoglycan biosynthesis. Its function is as follows. Cell wall formation. The sequence is that of UDP-N-acetylmuramate--L-alanine ligase from Mannheimia succiniciproducens (strain KCTC 0769BP / MBEL55E).